The sequence spans 152 residues: Ninjurin-1 (152 aa).

Position 1 is an N-acetylmethionine (Met-1). The segment covering 1 to 10 has biased composition (acidic residues); it reads MESGTEEYEL. Residues 1 to 29 form a disordered region; sequence MESGTEEYELNGDLRPGSPGSPDALPPRW. The Extracellular portion of the chain corresponds to 1-78; it reads MESGTEEYEL…EQGNDFAFFV (78 aa). 2 positions are modified to phosphoserine: Ser-18 and Ser-21. Residues 26-37 form an N-terminal adhesion motif region; the sequence is PPRWGLRNRPIN. The segment at 40-69 is required to induce plasma membrane rupture; sequence HYANKKSAAESMLDIALLMANASQLKAVVE. Positions 44–55 are helix alpha1; it reads KKSAAESMLDIA. Residues 58–74 form a helix alpha2 region; that stretch reads MANASQLKAVVEQGNDF. Asn-60 carries an N-linked (GlcNAc...) asparagine glycan. A helical membrane pass occupies residues 79–103; sequence PLVVLISISLVLQIGVGVLLIFLVK. Over 104–113 the chain is Cytoplasmic; the sequence is YDLNNPAKHA. Residues 114–138 form a helical membrane-spanning segment; the sequence is KLDFLNNLATGLVFIIVVVNIFITA. Over 139 to 152 the chain is Extracellular; the sequence is FGVQKPVMDVAPRQ.

Belongs to the ninjurin family. Homodimer; in absence of death stimuli, forms an inactive homodimer. Homooligomer; in response to death stimuli, homooligomerizes into long, highly branched filaments and large, ring-shaped structures in the membrane. In terms of processing, cleaved by MMP9 protease to generate the Secreted ninjurin-1 form. N-linked glycosylation is required for homooligomerization.

It localises to the cell membrane. It is found in the synaptic cell membrane. The protein resides in the secreted. In response to death stimuli, homooligomerizes and disrupts membrane integrity by introducing the hydrophilic faces of alpha1 and alpha2 helices into the hydrophobic membrane. Homooligomerization and ability to mediate plasma membrane rupture is inhibited by glycine; it is unclear whether glycine directly or indirectly inhibits homooligomerization. In normal conditions, NINJ1 is autoinhibited via formation of a homodimer: in the inactive homodimer, the alpha1 and alpha2 helices (residues 44-74) form a single transmembrane region without a kink, in which hydrophilic faces of alpha1 and alpha2 helices are sequestered. In terms of biological role, effector of various programmed cell death, such as pyroptosis and necroptosis, which mediates plasma membrane rupture (cytolysis). Oligomerizes in response to death stimuli and forms ring-like structures on the plasma membrane: acts by cutting and shedding membrane disks, like a cookie cutter, leading to membrane damage and loss that cannot be repaired by the cell. Plasma membrane rupture leads to release intracellular molecules named damage-associated molecular patterns (DAMPs) that propagate the inflammatory response. Mechanistically, mediates plasma membrane rupture by introducing hydrophilic faces of 2 alpha helices into the hydrophobic membrane. Induces plasma membrane rupture downstream of Gasdermin (GSDMA, GSDMB, GSDMC, GSDMD, or GSDME) or MLKL during pyroptosis or necroptosis, respectively. Acts as an effector of PANoptosis downstream of CASP1, CASP4, CASP8 and RIPK3. Also induces plasma membrane rupture in response to cell swelling caused by osmotic stress and ferroptosis downstream of lipid peroxidation. Acts as a regulator of Toll-like receptor 4 (TLR4) signaling triggered by lipopolysaccharide (LPS) during systemic inflammation; directly binds LPS. Involved in leukocyte migration during inflammation by promoting transendothelial migration of macrophages via homotypic binding. Promotes the migration of monocytes across the brain endothelium to central nervous system inflammatory lesions. Also acts as a homophilic transmembrane adhesion molecule involved in various processes such as axonal growth, cell chemotaxis and angiogenesis. Promotes cell adhesion by mediating homophilic interactions via its extracellular N-terminal adhesion motif (N-NAM). Involved in the progression of the inflammatory stress by promoting cell-to-cell interactions between immune cells and endothelial cells. Plays a role in nerve regeneration by promoting maturation of Schwann cells. Acts as a regulator of angiogenesis. Promotes the formation of new vessels by mediating the interaction between capillary pericyte cells and endothelial cells. Also mediates vascular functions in penile tissue as well as vascular formation. Promotes osteoclasts development by enhancing the survival of prefusion osteoclasts. Also involved in striated muscle growth and differentiation. Also involved in cell senescence in a p53/TP53 manner, possibly by acting as an indirect regulator of p53/TP53 mRNA translation. Its function is as follows. Secreted form generated by cleavage, which has chemotactic activity. Acts as an anti-inflammatory mediator by promoting monocyte recruitment, thereby ameliorating atherosclerosis. The polypeptide is Ninjurin-1 (Mus musculus (Mouse)).